Reading from the N-terminus, the 169-residue chain is Putative phosphoesterase SH1944 (169 aa).

The Proton donor role is filled by His34. Short sequence motifs (HXTX) lie at residues 34 to 37 and 115 to 118; these read HITI and HFTI. Residue His115 is the Proton acceptor of the active site.

Belongs to the 2H phosphoesterase superfamily. YjcG family.

This chain is Putative phosphoesterase SH1944, found in Staphylococcus haemolyticus (strain JCSC1435).